The sequence spans 738 residues: Glucan 1,4-alpha-glucosidase SusB (738 aa).

The first 21 residues, Met1 to Ala21, serve as a signal peptide directing secretion. Glu194 provides a ligand contact to Ca(2+). Substrate-binding positions include Pro215–Ser217, His437–Glu439, and His507–Glu508. Positions 508, 526, and 532 each coordinate Ca(2+). Residue Glu532 is the Proton donor/acceptor of the active site.

This sequence belongs to the glycosyl hydrolase 97 family. As to quaternary structure, monomer. The cofactor is Ca(2+).

It localises to the periplasm. It carries out the reaction Hydrolysis of terminal (1-&gt;4)-linked alpha-D-glucose residues successively from non-reducing ends of the chains with release of beta-D-glucose.. Its pathway is glycan degradation; starch degradation. In terms of biological role, glucoamylase that hydrolyzes alpha-1,4-glucosidic linkages, alpha-1,6-, alpha-1,3- and alpha-1,2-glucosidic linkages during starch degradation. The sequence is that of Glucan 1,4-alpha-glucosidase SusB (susB) from Bacteroides thetaiotaomicron (strain ATCC 29148 / DSM 2079 / JCM 5827 / CCUG 10774 / NCTC 10582 / VPI-5482 / E50).